The chain runs to 169 residues: Probable calcium-binding protein CML13 (169 aa).

Positions 1–26 (MSTVKGQTRRERPRGARPHGLTKQKR) are disordered. The segment covering 15 to 24 (GARPHGLTKQ) has biased composition (basic residues). EF-hand domains lie at 24-59 (QKRQ…LGFE), 60-95 (MTEE…KIGE), 97-132 (DSKE…LGEN), and 133-168 (FTYQ…TGYG). The Ca(2+) site is built by Asp-37, Asp-39, Ser-41, Thr-43, Glu-48, Asp-73, Asp-75, Ser-77, Ser-79, Glu-84, Asp-110, Asp-112, Asn-114, Lys-116, Asp-121, Asp-146, Asn-148, Asp-150, Glu-152, and Glu-157.

Functionally, potential calcium sensor. This chain is Probable calcium-binding protein CML13 (CML13), found in Oryza sativa subsp. japonica (Rice).